Here is a 621-residue protein sequence, read N- to C-terminus: Phosphoenolpyruvate carboxykinase [GTP] (621 aa).

Substrate-binding positions include R82 and 220 to 222 (YGG). K229 and H249 together coordinate Mn(2+). Residue S271 coordinates substrate. Residue 272-277 (QCGKTN) coordinates GTP. The active site involves C273. D296 is a binding site for Mn(2+). Residue 386–388 (NSR) participates in substrate binding. GTP-binding positions include R388, R419, and 514-517 (FGEN).

The protein belongs to the phosphoenolpyruvate carboxykinase [GTP] family. In terms of assembly, monomer. Mn(2+) is required as a cofactor.

Its subcellular location is the cytoplasm. The enzyme catalyses oxaloacetate + GTP = phosphoenolpyruvate + GDP + CO2. It functions in the pathway carbohydrate biosynthesis; gluconeogenesis. Functionally, catalyzes the conversion of oxaloacetate (OAA) to phosphoenolpyruvate (PEP), the rate-limiting step in the metabolic pathway that produces glucose from lactate and other precursors derived from the citric acid cycle. The protein is Phosphoenolpyruvate carboxykinase [GTP] of Corynebacterium kroppenstedtii (strain DSM 44385 / JCM 11950 / CIP 105744 / CCUG 35717).